The sequence spans 434 residues: NFATC2-interacting protein (434 aa).

Disordered stretches follow at residues 1-63 (MGSP…TPAL) and 176-237 (GSED…RAYN). Residues 28-59 (GPQPCPKPRGPQPCPKPRGPQPCPKPRGPQPC) show a composition bias toward pro residues. The span at 228-237 (PVRRKGRAYN) shows a compositional bias: basic residues. A Ubiquitin-like domain is found at 275 to 351 (PELTVKVRRG…IDCVVLSPPD (77 aa)).

Its subcellular location is the nucleus. The protein localises to the cytoplasm. Functionally, regulates the magnitude of NFAT-driven transcription of a specific subset of cytokine genes. The sequence is that of NFATC2-interacting protein (nfatc2ip) from Xenopus tropicalis (Western clawed frog).